The sequence spans 568 residues: Envelope glycoprotein E (568 aa).

Residues 1–20 form the signal peptide; the sequence is MMPATLAGLALAVTVATMFA. The Virion surface portion of the chain corresponds to 21–422; sequence QRVDSTTIHH…GGGPGNSKRR (402 aa). Residues Asn88, Asn179, and Asn248 are each glycosylated (N-linked (GlcNAc...) asparagine; by host). A disulfide bond links Cys271 and Cys280. A helical membrane pass occupies residues 423–443; it reads AAVLGAAVWIALTLLILGGLG. Residues 444–568 lie on the Intravirion side of the membrane; the sequence is AYVAVNKKCL…ANKTFPSQRY (125 aa). Positions 465–468 match the Internalization motif motif; that stretch reads KPTL. The tract at residues 470–534 is disordered; it reads THAHTYTSLP…SRRNSFGPTL (65 aa). Residues 482 to 497 are acidic; that stretch reads GDLSLEQDAEDEDEDE. Residues 486–500 show a composition bias toward acidic residues; it reads LEQDAEDEDEDEEEL. Residues 515 to 526 show a composition bias toward basic residues; the sequence is KSSRSPSRRSSR.

Belongs to the alphaherpesvirinae glycoprotein E family. As to quaternary structure, interacts with gI. In terms of processing, phosphorylated on serines within the acidic cluster. Phosphorylation determines whether endocytosed viral gE traffics to the trans-Golgi network or recycles to the cell membrane.

It localises to the virion membrane. The protein resides in the host cell membrane. The protein localises to the host cell junction. It is found in the host Golgi apparatus membrane. Its subcellular location is the host endosome membrane. In epithelial cells, the heterodimer gE/gI is required for the cell-to-cell spread of the virus, by sorting nascent virions to cell junctions. Once the virus reaches the cell junctions, virus particles can spread to adjacent cells extremely rapidly through interactions with cellular receptors that accumulate at these junctions. Implicated in basolateral spread in polarized cells. In neuronal cells, gE/gI is essential for the anterograde spread of the infection throughout the host nervous system. Together with US9, the heterodimer gE/gI is involved in the sorting and transport of viral structural components toward axon tips. The polypeptide is Envelope glycoprotein E (US8) (Psittacid herpesvirus 1 (isolate Amazon parrot/-/97-0001/1997) (PsHV-1)).